Consider the following 162-residue polypeptide: MSTKINSKKLEMFDLLKKFIDSKQNIFFLDYRGLSVSQLTDLRNKIEGEHGALKVVKNNIMKMVLKEKNIDVVDSCLVGPTVVVTALEEANVIAKIFYDFVKTTTLKVKGGFVLGEFYDEAKVQAYSKLPTKKESISLFASVLKAPVSKLVRTLKALADVKN.

Belongs to the universal ribosomal protein uL10 family. In terms of assembly, part of the ribosomal stalk of the 50S ribosomal subunit. The N-terminus interacts with L11 and the large rRNA to form the base of the stalk. The C-terminus forms an elongated spine to which L12 dimers bind in a sequential fashion forming a multimeric L10(L12)X complex.

Functionally, forms part of the ribosomal stalk, playing a central role in the interaction of the ribosome with GTP-bound translation factors. This is Large ribosomal subunit protein uL10 from Borreliella afzelii (strain PKo) (Borrelia afzelii).